A 492-amino-acid chain; its full sequence is Probable cytochrome P450 516B1 (492 aa).

The chain crosses the membrane as a helical span at residues 1–17 (MYLILSLIIFLAYVAFH). Cys438 contributes to the heme binding site.

Belongs to the cytochrome P450 family. The cofactor is heme.

It is found in the membrane. The polypeptide is Probable cytochrome P450 516B1 (cyp516B1) (Dictyostelium discoideum (Social amoeba)).